The chain runs to 212 residues: Imidazole glycerol phosphate synthase subunit HisH (212 aa).

Residues 1–211 (MIGVIDYGMG…KQFTQEQKVK (211 aa)) enclose the Glutamine amidotransferase type-1 domain. C79 functions as the Nucleophile in the catalytic mechanism. Residues H186 and E188 contribute to the active site.

In terms of assembly, heterodimer of HisH and HisF.

Its subcellular location is the cytoplasm. The enzyme catalyses 5-[(5-phospho-1-deoxy-D-ribulos-1-ylimino)methylamino]-1-(5-phospho-beta-D-ribosyl)imidazole-4-carboxamide + L-glutamine = D-erythro-1-(imidazol-4-yl)glycerol 3-phosphate + 5-amino-1-(5-phospho-beta-D-ribosyl)imidazole-4-carboxamide + L-glutamate + H(+). It catalyses the reaction L-glutamine + H2O = L-glutamate + NH4(+). It participates in amino-acid biosynthesis; L-histidine biosynthesis; L-histidine from 5-phospho-alpha-D-ribose 1-diphosphate: step 5/9. IGPS catalyzes the conversion of PRFAR and glutamine to IGP, AICAR and glutamate. The HisH subunit catalyzes the hydrolysis of glutamine to glutamate and ammonia as part of the synthesis of IGP and AICAR. The resulting ammonia molecule is channeled to the active site of HisF. The sequence is that of Imidazole glycerol phosphate synthase subunit HisH from Bacillus licheniformis (strain ATCC 14580 / DSM 13 / JCM 2505 / CCUG 7422 / NBRC 12200 / NCIMB 9375 / NCTC 10341 / NRRL NRS-1264 / Gibson 46).